Reading from the N-terminus, the 232-residue chain is MTVELEKIAGSFFISKGWKTFVHRTGLLSGQYIRFQVLTPSKINVLLFDKKKDSKLPMIPSSKKQIKTAPKRSTGITINDMPTSKHASMLISHTSNKETSSDSRTESMTDIPSSSDNSGETTRSFDDLCFCARNTAVTPDIKNYISIIGQFLQRSSKFYIVTMNNTFMKQDRLVEAAGSDSVTMLLHKSSDDRCNLKRGWATFAATNAIHLHSVCIFHFYKPPNVKITIDVL.

Positions 1–51 form a DNA-binding region, TF-B3 1; the sequence is MTVELEKIAGSFFISKGWKTFVHRTGLLSGQYIRFQVLTPSKINVLLFDKK. The segment at 92–121 is disordered; sequence SHTSNKETSSDSRTESMTDIPSSSDNSGET. Basic and acidic residues predominate over residues 95–107; sequence SNKETSSDSRTES. Positions 108 to 121 are enriched in polar residues; the sequence is MTDIPSSSDNSGET. A DNA-binding region (TF-B3 2) is located at residues 140–232; that stretch reads DIKNYISIIG…PNVKITIDVL (93 aa).

Its subcellular location is the nucleus. The protein is Putative B3 domain-containing protein Os11g0242900 of Oryza sativa subsp. japonica (Rice).